We begin with the raw amino-acid sequence, 77 residues long: Acyl carrier protein (77 aa).

Residues 2–77 form the Carrier domain; sequence SNIEERVKKI…AAIDYVSKNQ (76 aa). Ser-37 is modified (O-(pantetheine 4'-phosphoryl)serine).

It belongs to the acyl carrier protein (ACP) family. 4'-phosphopantetheine is transferred from CoA to a specific serine of apo-ACP by AcpS. This modification is essential for activity because fatty acids are bound in thioester linkage to the sulfhydryl of the prosthetic group.

It localises to the cytoplasm. It participates in lipid metabolism; fatty acid biosynthesis. Its function is as follows. Carrier of the growing fatty acid chain in fatty acid biosynthesis. In Shewanella denitrificans (strain OS217 / ATCC BAA-1090 / DSM 15013), this protein is Acyl carrier protein.